The sequence spans 367 residues: 2-aminoethylphosphonate--pyruvate transaminase (367 aa).

At lysine 194 the chain carries N6-(pyridoxal phosphate)lysine.

Belongs to the class-V pyridoxal-phosphate-dependent aminotransferase family. PhnW subfamily. In terms of assembly, homodimer. It depends on pyridoxal 5'-phosphate as a cofactor.

It carries out the reaction (2-aminoethyl)phosphonate + pyruvate = phosphonoacetaldehyde + L-alanine. Functionally, involved in phosphonate degradation. The protein is 2-aminoethylphosphonate--pyruvate transaminase of Salmonella choleraesuis (strain SC-B67).